A 151-amino-acid polypeptide reads, in one-letter code: MFDFPQPGEIYRSAGFPDVAVVGILEDGIPWEMPYRCPDIVWNPYRRKFSILVRILADGRTTDIPLGRFLREFTCDRPDLFKRSPVNRHAVLKEMAGDPELQKWREKYLDIYPQDTVPVSRAAPVAREWREIPRTEPDPETTPDNSYRNYL.

The segment at 130-151 (REIPRTEPDPETTPDNSYRNYL) is disordered.

This is an uncharacterized protein from Enterobacteria phage P4 (Bacteriophage P4).